The chain runs to 509 residues: Sorting nexin MVP1 (509 aa).

Over residues 1 to 25 (MDTYSGQNGWADTSNASPWGDTNDT) the composition is skewed to polar residues. The segment at 1–28 (MDTYSGQNGWADTSNASPWGDTNDTMPI) is disordered. One can recognise a PX domain in the interval 126-245 (QLDIISIEEI…TFLTVPTDLT (120 aa)). The a 1,2-diacyl-sn-glycero-3-phospho-(1D-myo-inositol-3-phosphate) site is built by R170, S172, K196, and R211.

The protein belongs to the sorting nexin family.

The protein localises to the cytoplasm. It localises to the membrane. Functionally, required for vacuolar protein sorting. The polypeptide is Sorting nexin MVP1 (MVP1) (Candida glabrata (strain ATCC 2001 / BCRC 20586 / JCM 3761 / NBRC 0622 / NRRL Y-65 / CBS 138) (Yeast)).